Here is a 304-residue protein sequence, read N- to C-terminus: Acetylglutamate kinase (304 aa).

Residues 82–83 (GG), Arg104, and Asn197 each bind substrate.

Belongs to the acetylglutamate kinase family. ArgB subfamily.

It localises to the cytoplasm. The catalysed reaction is N-acetyl-L-glutamate + ATP = N-acetyl-L-glutamyl 5-phosphate + ADP. The protein operates within amino-acid biosynthesis; L-arginine biosynthesis; N(2)-acetyl-L-ornithine from L-glutamate: step 2/4. In terms of biological role, catalyzes the ATP-dependent phosphorylation of N-acetyl-L-glutamate. The protein is Acetylglutamate kinase of Prochlorococcus marinus (strain NATL2A).